A 698-amino-acid chain; its full sequence is Sulfhydryl oxidase 2 (698 aa).

An N-terminal signal peptide occupies residues Met1–Arg21. A Thioredoxin domain is found at Pro34 to Asn178. Asn77 is a glycosylation site (N-linked (GlcNAc...) asparagine). Residues Cys91 and Cys94 each act as nucleophile in the active site. 2 disulfides stabilise this stretch: Cys91–Cys94 and Cys122–Cys131. Residues Asn178, Asn218, and Asn266 are each glycosylated (N-linked (GlcNAc...) asparagine). Residues Cys418 and Cys430 are joined by a disulfide bond. The ERV/ALR sulfhydryl oxidase domain occupies Ser421 to Trp530. Residues Arg426, Trp433, His437, Glu478, His482, Trp505–Asn512, Lys527, and Trp530 contribute to the FAD site. A disulfide bond links Cys476 and Cys479. An intrachain disulfide couples Cys536 to Cys539. The tract at residues Thr570–Ser624 is disordered. Over residues Ser572–Gly581 the composition is skewed to polar residues. At Ser579 the chain carries Phosphoserine. Over residues Arg586 to Gln607 the composition is skewed to basic and acidic residues. Residues Arg610–Pro622 show a composition bias toward low complexity. A helical transmembrane segment spans residues Ser662–Phe682.

Belongs to the quiescin-sulfhydryl oxidase (QSOX) family. It depends on FAD as a cofactor. In terms of tissue distribution, expressed in pancreas, brain, placenta, kidney, heart and fetal tissues. Weakly expressed in lung, liver and skeletal muscles.

The protein localises to the membrane. Its subcellular location is the secreted. It is found in the cell membrane. The protein resides in the nucleus membrane. It catalyses the reaction 2 R'C(R)SH + O2 = R'C(R)S-S(R)CR' + H2O2. Catalyzes the oxidation of sulfhydryl groups in peptide and protein thiols to disulfides with the reduction of oxygen to hydrogen peroxide. May contribute to disulfide bond formation in a variety of secreted proteins. Also seems to play a role in regulating the sensitization of neuroblastoma cells for interferon-gamma-induced apoptosis. This Homo sapiens (Human) protein is Sulfhydryl oxidase 2 (QSOX2).